Here is a 65-residue protein sequence, read N- to C-terminus: Large ribosomal subunit protein bL35 (65 aa).

Positions 1-16 are enriched in basic residues; the sequence is MPKQKTHRASAKRFKR. Residues 1-21 are disordered; that stretch reads MPKQKTHRASAKRFKRTGSGG.

This sequence belongs to the bacterial ribosomal protein bL35 family.

This is Large ribosomal subunit protein bL35 from Streptococcus pyogenes serotype M18 (strain MGAS8232).